Here is an 84-residue protein sequence, read N- to C-terminus: Putative membrane protein insertion efficiency factor (84 aa).

Belongs to the UPF0161 family.

Its subcellular location is the cell inner membrane. In terms of biological role, could be involved in insertion of integral membrane proteins into the membrane. The polypeptide is Putative membrane protein insertion efficiency factor (Acidiphilium cryptum (strain JF-5)).